Reading from the N-terminus, the 380-residue chain is Palmitoyltransferase ZDHHC18 (380 aa).

The interval 1-59 (MKDCEYQQISPGAAPPPASPGARRPGPAAPPAPSPGPAPGAPRWSGSGSGSGSLGRRPR) is disordered. The Cytoplasmic portion of the chain corresponds to 1-82 (MKDCEYQQIS…CGGRLMLAGH (82 aa)). Phosphoserine is present on S19. Residues 27 to 40 (PAAPPAPSPGPAPG) are compositionally biased toward pro residues. The chain crosses the membrane as a helical span at residues 83-103 (GGVFALTLLLILSTTILFFVF). Topologically, residues 104–111 (DCPYLART) are lumenal. A helical transmembrane segment spans residues 112–132 (LTLAIPIIAAILFFFVMSCLL). The Cytoplasmic segment spans residues 133–227 (QTSFTDPGIL…GNCVGRRNYR (95 aa)). The 51-residue stretch at 184–234 (KYCFTCKMFRPPRTSHCSVCDNCVERFDHHCPWVGNCVGRRNYRFFYAFIL) folds into the DHHC domain. Catalysis depends on C214, which acts as the S-palmitoyl cysteine intermediate. The helical transmembrane segment at 228–248 (FFYAFILSLSFLTAFIFACVV) threads the bilayer. The Lumenal portion of the chain corresponds to 249-269 (THLTLLSQGSNFLSALKKTPA). The helical transmembrane segment at 270 to 290 (SVLELVICFFSIWSILGLSGF) threads the bilayer. Residues 291–380 (HTYLVASNLT…PDASMVGGHP (90 aa)) are Cytoplasmic-facing. Residues 355 to 380 (ALPSPIRSDDPACGAKPDASMVGGHP) form a disordered region.

It belongs to the DHHC palmitoyltransferase family. ERF2/ZDHHC9 subfamily. As to expression, ubiquitously expressed.

The protein localises to the golgi apparatus membrane. The catalysed reaction is L-cysteinyl-[protein] + hexadecanoyl-CoA = S-hexadecanoyl-L-cysteinyl-[protein] + CoA. Palmitoyltransferase that catalyzes the addition of palmitate onto various protein substrates, such as CGAS, HRAS and LCK. Palmitoylates HRAS and LCK. Acts as a negative regulator of the cGAS-STING pathway be mediating palmitoylation and inactivation of CGAS. May also have a palmitoyltransferase activity toward the beta-2 adrenergic receptor/ADRB2 and therefore regulate G protein-coupled receptor signaling. The polypeptide is Palmitoyltransferase ZDHHC18 (Mus musculus (Mouse)).